We begin with the raw amino-acid sequence, 489 residues long: Equilibrative nucleobase transporter 1 (489 aa).

Residues 17 to 37 (LLECLGFAGVLFGWTSLVFVF) form a helical membrane-spanning segment. N56 carries N-linked (GlcNAc...) asparagine glycosylation. The next 4 helical transmembrane spans lie at 72-92 (LIFTLASFTINFMTFPTGYIF), 102-122 (LIAIFLYTSATLTIAFTSADS), 123-143 (AVLLFLAMPMLAVGGILFLIT), and 158-180 (IITMYNGAFDSSSAVFLIIKLLY). A Phosphoserine modification is found at S253. At T258 the chain carries Phosphothreonine. 6 helical membrane passes run 277 to 297 (FAWHVVWLSVIQLWHYLFIGT), 318 to 338 (NAFAVTQFFGVLCAPWNGLLM), 358 to 380 (AAALRSVVPSLTLTSLLSLGFAV), 402 to 422 (SFLYGCNAAFLTLAFPSEHFG), 426 to 446 (GLVMALSAVVSLLQFPLFTLI), and 455 to 475 (LYVNLMLVLLTLLTFIHPFLV).

Belongs to the SLC43A transporter (TC 2.A.1.44) family.

The protein localises to the basolateral cell membrane. It carries out the reaction adenine(out) = adenine(in). It catalyses the reaction guanine(out) = guanine(in). The catalysed reaction is hypoxanthine(out) = hypoxanthine(in). In terms of biological role, sodium-independent purine-selective nucleobase transporter which mediates the equilibrative transport of extracellular purine nucleobases such as adenine, guanine and hypoxanthine. May regulate fatty acid (FA) transport in adipocytes, acting as a positive regulator of FA efflux and as a negative regulator of FA uptake. This chain is Equilibrative nucleobase transporter 1 (SLC43A3), found in Bos taurus (Bovine).